Reading from the N-terminus, the 557-residue chain is Transcription factor fil1 (557 aa).

Positions 234-258 (SPVKRELNDSTSPSKLSESSSSLTG) are disordered. The span at 243–258 (STSPSKLSESSSSLTG) shows a compositional bias: low complexity. GATA-type zinc fingers lie at residues 365–390 (CFNC…CNAC) and 419–443 (CANC…CNAC).

The protein localises to the nucleus. Its subcellular location is the cytoplasm. Its function is as follows. Activates genes required for amino acid biosynthesis and acts as a master transcriptional regulator during amino acid starvation. Binds variations of the DNA sequence 5'-GAT[AC]GC-3'. The sequence is that of Transcription factor fil1 from Schizosaccharomyces pombe (strain 972 / ATCC 24843) (Fission yeast).